A 364-amino-acid chain; its full sequence is Lipoyl synthase, mitochondrial (364 aa).

The interval 34-53 is disordered; that stretch reads PNFQDFIQNSDNSKDDFENY. Residues cysteine 99, cysteine 104, cysteine 110, cysteine 130, cysteine 134, cysteine 137, and serine 345 each coordinate [4Fe-4S] cluster. The region spanning 115–334 is the Radical SAM core domain; that stretch reads EHGTQTATIM…EQRGNELGFL (220 aa).

This sequence belongs to the radical SAM superfamily. Lipoyl synthase family. [4Fe-4S] cluster serves as cofactor.

It is found in the mitochondrion. It carries out the reaction [[Fe-S] cluster scaffold protein carrying a second [4Fe-4S](2+) cluster] + N(6)-octanoyl-L-lysyl-[protein] + 2 oxidized [2Fe-2S]-[ferredoxin] + 2 S-adenosyl-L-methionine + 4 H(+) = [[Fe-S] cluster scaffold protein] + N(6)-[(R)-dihydrolipoyl]-L-lysyl-[protein] + 4 Fe(3+) + 2 hydrogen sulfide + 2 5'-deoxyadenosine + 2 L-methionine + 2 reduced [2Fe-2S]-[ferredoxin]. Its pathway is protein modification; protein lipoylation via endogenous pathway; protein N(6)-(lipoyl)lysine from octanoyl-[acyl-carrier-protein]: step 2/2. Functionally, catalyzes the radical-mediated insertion of two sulfur atoms into the C-6 and C-8 positions of the octanoyl moiety bound to the lipoyl domains of lipoate-dependent enzymes, thereby converting the octanoylated domains into lipoylated derivatives. This chain is Lipoyl synthase, mitochondrial, found in Drosophila grimshawi (Hawaiian fruit fly).